We begin with the raw amino-acid sequence, 447 residues long: Phosphoglucosamine mutase (447 aa).

Residue S104 is the Phosphoserine intermediate of the active site. The Mg(2+) site is built by S104, D243, D245, and D247. S104 bears the Phosphoserine mark.

Belongs to the phosphohexose mutase family. Mg(2+) serves as cofactor. Activated by phosphorylation.

The catalysed reaction is alpha-D-glucosamine 1-phosphate = D-glucosamine 6-phosphate. In terms of biological role, catalyzes the conversion of glucosamine-6-phosphate to glucosamine-1-phosphate. The polypeptide is Phosphoglucosamine mutase (Corynebacterium jeikeium (strain K411)).